A 544-amino-acid chain; its full sequence is Prolyl 4-hydroxylase subunit alpha-3 (544 aa).

Residues 1–19 form the signal peptide; sequence MGPAARLAALLAVLAFRAG. Residues 107 to 131 are a coiled coil; it reads LEASENIRALKDGYERVEQDLPAFE. One copy of the TPR repeat lies at 227–260; it reads EDALDHLAFAYFQAGNVLCALNLSREFLLYSPDN. Residue Asn248 is glycosylated (N-linked (GlcNAc...) asparagine). Positions 422–529 constitute a Fe2OG dioxygenase domain; that stretch reads YAEYLQVVNY…KWVANKWIHE (108 aa). Positions 440 and 442 each coordinate Fe cation. A glycan (N-linked (GlcNAc...) asparagine) is linked at Asn482. His510 contributes to the Fe cation binding site. Residue Lys520 participates in 2-oxoglutarate binding.

Belongs to the P4HA family. Heterotetramer of two alpha-3 chains and two beta chains (the beta chain is the multi-functional PDI). Fe(2+) is required as a cofactor. The cofactor is L-ascorbate. In terms of processing, N-glycosylation plays no role in the catalytic activity.

The protein localises to the endoplasmic reticulum lumen. It catalyses the reaction L-prolyl-[collagen] + 2-oxoglutarate + O2 = trans-4-hydroxy-L-prolyl-[collagen] + succinate + CO2. Its function is as follows. Catalyzes the post-translational formation of 4-hydroxyproline in -Xaa-Pro-Gly- sequences in collagens and other proteins. The polypeptide is Prolyl 4-hydroxylase subunit alpha-3 (P4HA3) (Bos taurus (Bovine)).